The primary structure comprises 143 residues: UPF0047 protein MTH_771 (143 aa).

Belongs to the UPF0047 family.

This chain is UPF0047 protein MTH_771, found in Methanothermobacter thermautotrophicus (strain ATCC 29096 / DSM 1053 / JCM 10044 / NBRC 100330 / Delta H) (Methanobacterium thermoautotrophicum).